A 294-amino-acid chain; its full sequence is ATP phosphoribosyltransferase (294 aa).

Belongs to the ATP phosphoribosyltransferase family. Long subfamily. Mg(2+) serves as cofactor.

It is found in the cytoplasm. It catalyses the reaction 1-(5-phospho-beta-D-ribosyl)-ATP + diphosphate = 5-phospho-alpha-D-ribose 1-diphosphate + ATP. It participates in amino-acid biosynthesis; L-histidine biosynthesis; L-histidine from 5-phospho-alpha-D-ribose 1-diphosphate: step 1/9. With respect to regulation, feedback inhibited by histidine. In terms of biological role, catalyzes the condensation of ATP and 5-phosphoribose 1-diphosphate to form N'-(5'-phosphoribosyl)-ATP (PR-ATP). Has a crucial role in the pathway because the rate of histidine biosynthesis seems to be controlled primarily by regulation of HisG enzymatic activity. In Chlorobium phaeobacteroides (strain DSM 266 / SMG 266 / 2430), this protein is ATP phosphoribosyltransferase.